Here is a 3994-residue protein sequence, read N- to C-terminus: Hybrid PKS-NRPs synthetase opdA (3994 aa).

Residues 6–442 (PEPIAIVGSS…GTNSHVILES (437 aa)) form the Ketosynthase family 3 (KS3) domain. Catalysis depends on for beta-ketoacyl synthase activity residues C179, H316, and H362. The malonyl-CoA:ACP transacylase (MAT) domain stretch occupies residues 559-881 (VFTGQGAQWP…LKRDSNDVEA (323 aa)). Residues 951–1085 (HELLGRRTHD…GRLIIHLGET (135 aa)) are N-terminal hotdog fold. A dehydratase (DH) domain region spans residues 951 to 1251 (HELLGRRTHD…SVKPMAPPTA (301 aa)). A PKS/mFAS DH domain is found at 951-1252 (HELLGRRTHD…VKPMAPPTAE (302 aa)). H983 acts as the Proton acceptor; for dehydratase activity in catalysis. The segment at 1100-1252 (LLSVDTDEGY…VKPMAPPTAE (153 aa)) is C-terminal hotdog fold. The Proton donor; for dehydratase activity role is filled by D1159. Residues 1292 to 1593 (DRVVLYYVQR…VDLAFHDLPD (302 aa)) form a methyltransferase (MT) domain region. Residues 2123–2297 (TYLMVGMAGG…ASIIHIGFVT (175 aa)) are ketoreductase (KR) domain. One can recognise a Carrier 1 domain in the interval 2406–2483 (EAVEITQKAF…QICTNAAKQL (78 aa)). The residue at position 2443 (S2443) is an O-(pantetheine 4'-phosphoryl)serine. Residues 2486–2575 (QKGGQEPSEQ…FDPDDRDYNP (90 aa)) form a disordered region. 2 stretches are compositionally biased toward polar residues: residues 2505–2514 (LHVSQGSLHT) and 2522–2546 (TETS…SVTD). A compositionally biased stretch (basic and acidic residues) spans 2547–2556 (TVEKRDKGDI). A compositionally biased stretch (acidic residues) spans 2557-2570 (SVDEGPNEQFDPDD). The tract at residues 2582 to 3007 (RLSSGQSRIY…SNTYMTVAKI (426 aa)) is condensation (C) domain. Residues 3043 to 3436 (HETNREDLAI…DGSLVFLGRL (394 aa)) are adenylation (A) (KR) domain. A Carrier 2 domain is found at 3553 to 3630 (PKLSLRQSEL…KMTMLVDLER (78 aa)). S3590 is modified (O-(pantetheine 4'-phosphoryl)serine). Positions 3679–3895 (TGATGFLGGS…FDFKKVEEVA (217 aa)) are reductase (RED) domain.

It in the C-terminal section; belongs to the NRP synthetase family. Requires pantetheine 4'-phosphate as cofactor.

It participates in secondary metabolite biosynthesis. Functionally, hybrid PKS-NRPS synthetase; part of the gene cluster that mediates the biosynthesis of oxopyrrolidines, polyketide-amino acid hybrid compounds with feature structures of tetramic acid. The polyketide chain is first assembled by the highly reducing PKS module of opdA using acetyl-CoA as the starter unit and five malonyl-CoA as the extender units. OpdC acts as trans-acting enoyl reductase and reduces the terminal alkenyl to alkane. The 17R in oxopyrrolidine A and 15R, 17S in oxopyrrolidine B are generated by non-stereospecific catalysis of the ketoreductase (KR) domain and enoyl reductases. Then the polyketides with specific configurations are transferred to the NRPS module of opdA and linked to L-tyrosine to form an amide bond. Finally, the oxopyrrolidines are offloaded through a Dieckmann cyclization catalyzed by the terminal D domain to give a tetramic acid moiety. The chain is Hybrid PKS-NRPs synthetase opdA from Penicillium oxalicum (strain 114-2 / CGMCC 5302) (Penicillium decumbens).